Consider the following 299-residue polypeptide: Phosphoribosylaminoimidazole-succinocarboxamide synthase (299 aa).

It belongs to the SAICAR synthetase family.

The enzyme catalyses 5-amino-1-(5-phospho-D-ribosyl)imidazole-4-carboxylate + L-aspartate + ATP = (2S)-2-[5-amino-1-(5-phospho-beta-D-ribosyl)imidazole-4-carboxamido]succinate + ADP + phosphate + 2 H(+). It functions in the pathway purine metabolism; IMP biosynthesis via de novo pathway; 5-amino-1-(5-phospho-D-ribosyl)imidazole-4-carboxamide from 5-amino-1-(5-phospho-D-ribosyl)imidazole-4-carboxylate: step 1/2. The polypeptide is Phosphoribosylaminoimidazole-succinocarboxamide synthase (Leifsonia xyli subsp. xyli (strain CTCB07)).